Reading from the N-terminus, the 360-residue chain is Histidinol-phosphate aminotransferase (360 aa).

Lysine 222 carries the N6-(pyridoxal phosphate)lysine modification.

This sequence belongs to the class-II pyridoxal-phosphate-dependent aminotransferase family. Histidinol-phosphate aminotransferase subfamily. In terms of assembly, homodimer. Pyridoxal 5'-phosphate serves as cofactor.

The catalysed reaction is L-histidinol phosphate + 2-oxoglutarate = 3-(imidazol-4-yl)-2-oxopropyl phosphate + L-glutamate. The protein operates within amino-acid biosynthesis; L-histidine biosynthesis; L-histidine from 5-phospho-alpha-D-ribose 1-diphosphate: step 7/9. This chain is Histidinol-phosphate aminotransferase, found in Listeria monocytogenes serotype 4b (strain F2365).